The primary structure comprises 680 residues: Outer dense fiber protein 2 (680 aa).

A disordered region spans residues leucine 27 to aspartate 46. Serine 68 and serine 69 each carry phosphoserine. Phosphothreonine is present on threonine 87. A Phosphoserine; by TSSK4 modification is found at serine 90. A phosphoserine mark is found at serine 101 and serine 104. The residue at position 105 (threonine 105) is a Phosphothreonine. Residues serine 110 and serine 124 each carry the phosphoserine modification. Lysine 133 is covalently cross-linked (Glycyl lysine isopeptide (Lys-Gly) (interchain with G-Cter in SUMO2)). Serine 134 is modified (phosphoserine). Residues glutamine 139–aspartate 212 adopt a coiled-coil conformation. Threonine 226 bears the Phosphothreonine mark. Serine 256 is subject to Phosphoserine. 2 coiled-coil regions span residues lysine 275–leucine 418 and glutamate 456–arginine 630. The interval lysine 387–lysine 410 is disordered. At serine 627 the chain carries Phosphoserine. The interval arginine 632–histidine 680 is disordered.

It belongs to the ODF2 family. As to quaternary structure, self-associates. Associates with microtubules and forms a fibrillar structure partially linked to the microtubule network. Interacts via its C-terminus with PLK1. Interacts with ODF1. Interacts with MARK4; the interaction is required for localization of ODF2 to centrioles. Interacts with TSSK4. Interacts with AKNA. Interacts with QRICH2. Interacts with CFAP58. Interacts with BBOF1. Interacts with CCDC38. Interacts with CCDC42. In terms of processing, tyrosine phosphorylated. Phosphorylated on Ser-90 by TSSK4.

It localises to the cytoplasm. Its subcellular location is the cytoskeleton. The protein localises to the microtubule organizing center. The protein resides in the centrosome. It is found in the cell projection. It localises to the cilium. Its subcellular location is the centriole. The protein localises to the spindle pole. The protein resides in the flagellum. Seems to be a major component of sperm tail outer dense fibers (ODF). ODFs are filamentous structures located on the outside of the axoneme in the midpiece and principal piece of the mammalian sperm tail and may help to maintain the passive elastic structures and elastic recoil of the sperm tail. May have a modulating influence on sperm motility. Functions as a general scaffold protein that is specifically localized at the distal/subdistal appendages of mother centrioles. Component of the centrosome matrix required for the localization of PLK1 and NIN to the centrosomes. Required for the formation and/or maintenance of normal CETN1 assembly. The chain is Outer dense fiber protein 2 (ODF2) from Pongo abelii (Sumatran orangutan).